Consider the following 308-residue polypeptide: Oligopeptide transport system permease protein AmiD (308 aa).

Transmembrane regions (helical) follow at residues 43 to 63 (TVVM…YPMF), 111 to 131 (ILIS…VGGI), 145 to 167 (VYNV…SIGA), 171 to 193 (NLIF…VQIL), 234 to 254 (MLPS…GLPI), and 274 to 294 (AYLF…LFVV). The 189-residue stretch at 107-295 (ARNSILISVI…LVSLSLFVVG (189 aa)) folds into the ABC transmembrane type-1 domain.

This sequence belongs to the binding-protein-dependent transport system permease family. OppBC subfamily.

It is found in the cell membrane. In terms of biological role, part of the binding-protein-dependent transport system for oligopeptides; probably responsible for the translocation of the substrate across the membrane. The chain is Oligopeptide transport system permease protein AmiD (amiD) from Streptococcus pneumoniae (strain ATCC BAA-255 / R6).